Here is a 782-residue protein sequence, read N- to C-terminus: Coiled-coil alpha-helical rod protein 1 (782 aa).

2 stretches are compositionally biased toward basic and acidic residues: residues 62–74 (ERDVSSDRQEPGR) and 208–218 (ETRRAGEAKEL). Disordered regions lie at residues 62 to 82 (ERDVSSDRQEPGRRGRSWGLE) and 177 to 218 (EQLS…AKEL). Coiled-coil stretches lie at residues 82–314 (EGSQ…ELTR), 344–437 (LMVQ…NAVS), and 498–691 (VADV…QQEG).

Its subcellular location is the cytoplasm. It localises to the nucleus. Functionally, may be a regulator of keratinocyte proliferation or differentiation. This Pan troglodytes (Chimpanzee) protein is Coiled-coil alpha-helical rod protein 1 (CCHCR1).